Reading from the N-terminus, the 100-residue chain is Aspartyl/glutamyl-tRNA(Asn/Gln) amidotransferase subunit C (100 aa).

The protein belongs to the GatC family. Heterotrimer of A, B and C subunits.

It carries out the reaction L-glutamyl-tRNA(Gln) + L-glutamine + ATP + H2O = L-glutaminyl-tRNA(Gln) + L-glutamate + ADP + phosphate + H(+). The catalysed reaction is L-aspartyl-tRNA(Asn) + L-glutamine + ATP + H2O = L-asparaginyl-tRNA(Asn) + L-glutamate + ADP + phosphate + 2 H(+). Its function is as follows. Allows the formation of correctly charged Asn-tRNA(Asn) or Gln-tRNA(Gln) through the transamidation of misacylated Asp-tRNA(Asn) or Glu-tRNA(Gln) in organisms which lack either or both of asparaginyl-tRNA or glutaminyl-tRNA synthetases. The reaction takes place in the presence of glutamine and ATP through an activated phospho-Asp-tRNA(Asn) or phospho-Glu-tRNA(Gln). In Petrotoga mobilis (strain DSM 10674 / SJ95), this protein is Aspartyl/glutamyl-tRNA(Asn/Gln) amidotransferase subunit C.